We begin with the raw amino-acid sequence, 112 residues long: UPF0329 protein ECU11_0080 (112 aa).

This sequence belongs to the UPF0329 family.

This chain is UPF0329 protein ECU11_0080, found in Encephalitozoon cuniculi (strain GB-M1) (Microsporidian parasite).